The primary structure comprises 400 residues: Elongation factor Tu (400 aa).

The tr-type G domain occupies Lys-10–Gln-208. The interval Gly-19 to Ser-26 is G1. Gly-19 to Ser-26 lines the GTP pocket. Ser-26 is a binding site for Mg(2+). The G2 stretch occupies residues Gly-60–Asn-64. The segment at Asp-81–Gly-84 is G3. GTP contacts are provided by residues Asp-81–His-85 and Asn-136–Asp-139. A G4 region spans residues Asn-136 to Asp-139. Residues Ser-174–Leu-176 form a G5 region.

Belongs to the TRAFAC class translation factor GTPase superfamily. Classic translation factor GTPase family. EF-Tu/EF-1A subfamily. In terms of assembly, monomer.

The protein resides in the cytoplasm. The enzyme catalyses GTP + H2O = GDP + phosphate + H(+). GTP hydrolase that promotes the GTP-dependent binding of aminoacyl-tRNA to the A-site of ribosomes during protein biosynthesis. This chain is Elongation factor Tu, found in Thermotoga petrophila (strain ATCC BAA-488 / DSM 13995 / JCM 10881 / RKU-1).